A 610-amino-acid polypeptide reads, in one-letter code: Aspartate--tRNA(Asp/Asn) ligase (610 aa).

Glu182 is a binding site for L-aspartate. The segment at 206 to 209 (QLFK) is aspartate. Arg228 provides a ligand contact to L-aspartate. ATP is bound by residues 228-230 (RDE) and Gln237. L-aspartate is bound at residue His470. Glu506 provides a ligand contact to ATP. Arg513 provides a ligand contact to L-aspartate. Residue 558–561 (GLDR) participates in ATP binding.

Belongs to the class-II aminoacyl-tRNA synthetase family. Type 1 subfamily. Homodimer.

The protein localises to the cytoplasm. It carries out the reaction tRNA(Asx) + L-aspartate + ATP = L-aspartyl-tRNA(Asx) + AMP + diphosphate. Aspartyl-tRNA synthetase with relaxed tRNA specificity since it is able to aspartylate not only its cognate tRNA(Asp) but also tRNA(Asn). Reaction proceeds in two steps: L-aspartate is first activated by ATP to form Asp-AMP and then transferred to the acceptor end of tRNA(Asp/Asn). The sequence is that of Aspartate--tRNA(Asp/Asn) ligase from Acidobacterium capsulatum (strain ATCC 51196 / DSM 11244 / BCRC 80197 / JCM 7670 / NBRC 15755 / NCIMB 13165 / 161).